The sequence spans 152 residues: SsrA-binding protein (152 aa).

It belongs to the SmpB family.

The protein resides in the cytoplasm. In terms of biological role, required for rescue of stalled ribosomes mediated by trans-translation. Binds to transfer-messenger RNA (tmRNA), required for stable association of tmRNA with ribosomes. tmRNA and SmpB together mimic tRNA shape, replacing the anticodon stem-loop with SmpB. tmRNA is encoded by the ssrA gene; the 2 termini fold to resemble tRNA(Ala) and it encodes a 'tag peptide', a short internal open reading frame. During trans-translation Ala-aminoacylated tmRNA acts like a tRNA, entering the A-site of stalled ribosomes, displacing the stalled mRNA. The ribosome then switches to translate the ORF on the tmRNA; the nascent peptide is terminated with the 'tag peptide' encoded by the tmRNA and targeted for degradation. The ribosome is freed to recommence translation, which seems to be the essential function of trans-translation. The chain is SsrA-binding protein from Rickettsia conorii (strain ATCC VR-613 / Malish 7).